The chain runs to 466 residues: Probable Xaa-Pro aminopeptidase pepP (466 aa).

Asp264, Asp275, Glu398, and Glu438 together coordinate Mn(2+).

This sequence belongs to the peptidase M24B family. Mn(2+) serves as cofactor.

It carries out the reaction Release of any N-terminal amino acid, including proline, that is linked to proline, even from a dipeptide or tripeptide.. Catalyzes the removal of a penultimate prolyl residue from the N-termini of peptides. This Aspergillus terreus (strain NIH 2624 / FGSC A1156) protein is Probable Xaa-Pro aminopeptidase pepP (pepP).